A 244-amino-acid chain; its full sequence is MMRTPGLLGLRGFVAFAAKLWSFVLYLLRRQFRTIIQYQTVRYDVLPLSPASRNRLSQVKRKVLVLDLDETLIHSHHDGVLRPTVRPGTPPDFILKVVIDKHPVRFFVHKRPHVDFFLEVVSQWYELVVFTASMEIYGSAVADKLDNNKGVLRRRFYRQHCTLELGSYIKDLSVVHSDLSSVVILDNSPGAYRSHPDNAIPIKSWFSDPSDTALLNLLPMLDALRFTADVRSVLSRNLHQHRLW.

The helical transmembrane segment at 7–29 threads the bilayer; it reads LLGLRGFVAFAAKLWSFVLYLLR. The FCP1 homology domain maps to 58–225; the sequence is QVKRKVLVLD…NLLPMLDALR (168 aa).

This sequence belongs to the dullard family. Interacts with bmpr1a, bmpr1b and bmpr2.

It localises to the membrane. The protein localises to the cytoplasm. The protein resides in the perinuclear region. The enzyme catalyses O-phospho-L-seryl-[protein] + H2O = L-seryl-[protein] + phosphate. It catalyses the reaction O-phospho-L-threonyl-[protein] + H2O = L-threonyl-[protein] + phosphate. Serine/threonine protein phosphatase that may dephosphorylate and activate lipins. Lipins are phosphatidate phosphatases that catalyze the conversion of phosphatidic acid to diacylglycerol and control the metabolism of fatty acids at different levels. May indirectly modulate the lipid composition of nuclear and/or endoplasmic reticulum membranes and be required for proper nuclear membrane morphology and/or dynamics. May also indirectly regulate the production of lipid droplets and triacylglycerol. Induces neuronal differentiation by antagonizing BMP signaling. Acts both by dephosphorylating BMPR1A and by promoting BMPR2 proteasomal degradation. This chain is CTD nuclear envelope phosphatase 1 (ctdnep1), found in Xenopus laevis (African clawed frog).